We begin with the raw amino-acid sequence, 95 residues long: Signal recognition particle 19 kDa protein (95 aa).

It belongs to the SRP19 family. Part of the signal recognition particle protein translocation system, which is composed of SRP and FtsY. Archaeal SRP consists of a 7S RNA molecule of 300 nucleotides and two protein subunits: SRP54 and SRP19.

The protein resides in the cytoplasm. Functionally, involved in targeting and insertion of nascent membrane proteins into the cytoplasmic membrane. Binds directly to 7S RNA and mediates binding of the 54 kDa subunit of the SRP. This Desulfurococcus amylolyticus (strain DSM 18924 / JCM 16383 / VKM B-2413 / 1221n) (Desulfurococcus kamchatkensis) protein is Signal recognition particle 19 kDa protein.